The primary structure comprises 318 residues: Taste receptor type 2 member 60 (318 aa).

The Extracellular portion of the chain corresponds to Met-1–Val-7. The helical transmembrane segment at Leu-8–Arg-28 threads the bilayer. Topologically, residues Leu-29–Ala-40 are cytoplasmic. A helical transmembrane segment spans residues Ala-41 to Ser-61. Residues Leu-62–Pro-88 lie on the Extracellular side of the membrane. A helical transmembrane segment spans residues Tyr-89–Trp-109. The Cytoplasmic segment spans residues Phe-110 to Pro-128. Residues Val-129–Val-149 traverse the membrane as a helical segment. The Extracellular portion of the chain corresponds to Gly-150–Asn-183. N-linked (GlcNAc...) asparagine glycosylation is present at Asn-179. A helical membrane pass occupies residues Ser-184 to Met-204. Residues Pro-205–Phe-234 lie on the Cytoplasmic side of the membrane. The helical transmembrane segment at Arg-235–Leu-255 threads the bilayer. At Phe-256–Val-264 the chain is on the extracellular side. Residues Phe-265–Ile-285 traverse the membrane as a helical segment. Residues Tyr-286 to Pro-318 lie on the Cytoplasmic side of the membrane.

Belongs to the G-protein coupled receptor T2R family.

Its subcellular location is the membrane. Receptor that may play a role in the perception of bitterness and is gustducin-linked. May play a role in sensing the chemical composition of the gastrointestinal content. The activity of this receptor may stimulate alpha gustducin, mediate PLC-beta-2 activation and lead to the gating of TRPM5. This chain is Taste receptor type 2 member 60 (TAS2R60), found in Pan paniscus (Pygmy chimpanzee).